We begin with the raw amino-acid sequence, 458 residues long: Divalent metal cation transporter MntH (458 aa).

Helical transmembrane passes span 38-58 (GFWK…VGYM), 86-106 (LIAM…GMDL), 119-139 (GIFL…AEII), 151-171 (IPLL…LLLM), 180-200 (AIVA…VILA), 223-243 (MLFL…LYLH), 275-295 (LTIA…MFYG), 315-335 (IVGS…LLAS), 370-390 (GLSI…EAQV), 395-415 (IYSQ…LTLF), and 436-456 (WFVT…TVGL).

The protein belongs to the NRAMP family.

It is found in the cell membrane. In terms of biological role, h(+)-stimulated, divalent metal cation uptake system. This Latilactobacillus sakei subsp. sakei (strain 23K) (Lactobacillus sakei subsp. sakei) protein is Divalent metal cation transporter MntH.